The chain runs to 824 residues: ABC transporter B family member 7 (824 aa).

A disordered region spans residues 41 to 101; the sequence is RNSVKFNLDT…NKNNKNKINN (61 aa). Positions 63 to 101 are enriched in low complexity; the sequence is NNNKNNNNNNNNNNNNNNNNNNNNNNNNNNKNNKNKINN. The next 6 membrane-spanning stretches (helical) occupy residues 164-184, 252-272, 325-345, 347-367, 431-451, and 461-481; these read IWYFVFAFLALSITTLCQLAL, WIIIIVLVQTPFLFARYLLFT, LSTLVRCSLQLIGGLLILVFL, WKVTLLMISFLVILLISFLVF, AFWISFGSLLVMGTIIGIYGF, and ILLLQFILYSLMITASMNGLI. The ABC transmembrane type-1 domain occupies 167–489; it reads FVFAFLALSI…LIGSINEIQK (323 aa). Positions 521–767 constitute an ABC transporter domain; sequence ISFDNVYFNN…STSFYVTSVL (247 aa). 570-576 provides a ligand contact to ATP; that stretch reads GPSQSKE. The disordered stretch occupies residues 772 to 813; the sequence is NKYNNNNNNNNNNNNNNNNNNNNNNNNNNNNNNNNNNNNINN.

It belongs to the ABC transporter superfamily. ABCB family.

It localises to the membrane. The sequence is that of ABC transporter B family member 7 (abcB7) from Dictyostelium discoideum (Social amoeba).